A 302-amino-acid chain; its full sequence is NAD kinase (302 aa).

Residue aspartate 79 is the Proton acceptor of the active site. Residues 79 to 80 (DG), 153 to 154 (ND), arginine 181, aspartate 183, 194 to 199 (TAYALS), alanine 218, and glutamine 252 each bind NAD(+).

It belongs to the NAD kinase family. A divalent metal cation is required as a cofactor.

The protein localises to the cytoplasm. The catalysed reaction is NAD(+) + ATP = ADP + NADP(+) + H(+). In terms of biological role, involved in the regulation of the intracellular balance of NAD and NADP, and is a key enzyme in the biosynthesis of NADP. Catalyzes specifically the phosphorylation on 2'-hydroxyl of the adenosine moiety of NAD to yield NADP. The chain is NAD kinase from Ralstonia nicotianae (strain ATCC BAA-1114 / GMI1000) (Ralstonia solanacearum).